The primary structure comprises 704 residues: MKIVLVLAGLIALVQSSVVHPPPHVLKTKDVDTVFVERQKKVLSLFQDVDQLNTNDEYYKIGKDYDIEANIDNYTNKKAVEDFLKMYRCGFLPKYNEFSVFHDKLRDEAIALFHLFYYAKDFDTFYKSAAFARVHLNQGQFLYAYYIAIIQRKDTYGIVLPAPYEIYPELFVNIDTTYKMFRTKMQNGLINPEAAVEYGIVKEDNHYVYYSNYSNAITYYNEEQRLAYFTEDIGLNAYYFFFHIHLPFWWTAEKYGNLKERRGEMYHYFYDQLLTRYYFERLTNGLGTIPEFSWYSPVKTGHYPLLTSYYTPFSQRPNFYNVHSEENYEKIRFLDAYENYFVQALQKGVFEGFGQTIYLNDSKANSFVGNYWQDNADLYGEEVTKDYQRSYEIVARQVLGAAPKPFDKYTFMPSALDFYQTSLRDPTFYQLYNRIIGYFNQFKQYLEPHSQEKLHFVGVKVNNVVVDKLVTFFEYYDFDATNTVFLTEEELKTKYPHNLKVRQPRLNHQPFNINIDIKADVATDAVVKIFMGPKYNENGFPITLENDWMKFFEMDWFTHKITPGQNTIVRNSNEFVIFKEDSLPSTELYKLLEKGKVPFDMSEDFGYLPKRLMLPRGTKGGFPFQFVVFVYPFESTTKNLTPYEKFMIDNKPLGYPFDRPVDTSCFKQPNIFFRDVSVYHEGEYHAYEYNVPAYFSHTNKVPKE.

The first 16 residues, 1–16, serve as a signal peptide directing secretion; sequence MKIVLVLAGLIALVQS. Asparagine 73, asparagine 212, and asparagine 360 each carry an N-linked (GlcNAc...) asparagine glycan.

The protein belongs to the hemocyanin family. Homohexamer of two stacked trimers; disulfide-linked. Glycosylation at Asn-360 is required for proper folding.

It is found in the secreted. Its subcellular location is the extracellular space. Its function is as follows. Arylphorin is a larval storage protein (LSP) which may serve as a storage protein used primarily as a source of aromatic amino acids for protein synthesis during metamorphosis. It is a constituent of the sclerotizing system of the cuticle, and serves as a carrier for ecdysteroid hormone. This chain is Arylphorin, found in Antheraea pernyi (Chinese oak silk moth).